A 279-amino-acid polypeptide reads, in one-letter code: MQKYLEKANVLIEALPYIRKFNSKIILIKYGGSAMENEELKHCVMQDIALLKLVGLKPIIVHGGGKDISAMCEKLGVKSEFKNGLRVSDKATTEVASMVLNHINKNLVHSLQNLGVKAIGLCGKDGALLECVKKDENLAFVGTIQKVNSKILEELLEKDFLPIIAPIGMDENFNTYNINADDAACAIAKALRAEKLAFLTDTAGLYEDFNDKNSLISKISLEQAKILAPKIEGGMHVKLKSCIDACENGVKKVHILDGRVKHSLLLEFFTDEGIGTLVG.

Substrate contacts are provided by residues 64 to 65 (GG), arginine 86, and asparagine 177.

It belongs to the acetylglutamate kinase family. ArgB subfamily.

It is found in the cytoplasm. The enzyme catalyses N-acetyl-L-glutamate + ATP = N-acetyl-L-glutamyl 5-phosphate + ADP. The protein operates within amino-acid biosynthesis; L-arginine biosynthesis; N(2)-acetyl-L-ornithine from L-glutamate: step 2/4. Its function is as follows. Catalyzes the ATP-dependent phosphorylation of N-acetyl-L-glutamate. The polypeptide is Acetylglutamate kinase (Campylobacter jejuni subsp. jejuni serotype O:23/36 (strain 81-176)).